We begin with the raw amino-acid sequence, 458 residues long: Peptidyl-prolyl cis-trans isomerase FKBP4 (458 aa).

An N-acetylmethionine; in peptidyl-prolyl cis-trans isomerase FKBP4; alternate modification is found at Met1. N-acetylthreonine; in peptidyl-prolyl cis-trans isomerase FKBP4, N-terminally processed; partial is present on Thr2. Residues 50–138 (GDRVFVHYTG…VFEVELFEFK (89 aa)) form the PPIase FKBP-type 1 domain. Thr143 is subject to Phosphothreonine; by CK2. Residues 167–253 (GAMVEVALEG…RYEVHLKSFE (87 aa)) form the PPIase FKBP-type 2 domain. Residue Tyr220 is modified to Phosphotyrosine. An interaction with tubulin region spans residues 267–400 (LEQSNIVKER…TQLAVCQQRT (134 aa)). TPR repeat units lie at residues 270-303 (SNIVKERGTVYFKEGKYKQALLQYKKIVSWLEYE), 319-352 (LASHLNLAMCHLKLQAFSAAIESCNKALELDSNN), and 353-386 (EKGLFRRGEAHLAVNDFDLARADFQKVLQLYPSN). An N6-acetyllysine modification is found at Lys282. The residue at position 373 (Arg373) is an Omega-N-methylarginine. The interval 423–458 (HKAKTEVAAGDHPTDAEMKGEPNNVAGNQAQVKTEA) is disordered. Thr436 bears the Phosphothreonine mark. A Glycyl lysine isopeptide (Lys-Gly) (interchain with G-Cter in SUMO1) cross-link involves residue Lys441. Polar residues predominate over residues 447-458 (VAGNQAQVKTEA).

As to quaternary structure, homodimer. Interacts with GLMN. Associates with HSP90AA1 and HSP70 in steroid hormone receptor complexes. Also interacts with peroxisomal phytanoyl-CoA alpha-hydroxylase (PHYH). Interacts with NR3C1 and dynein. Interacts with HSF1 in the HSP90 complex. Associates with tubulin. Interacts with MAPT/TAU. Interacts (via TPR domain) with S100A1, S100A2 and S100A6; the interaction is Ca(2+) dependent. Interaction with S100A1 and S100A2 (but not with S100A6) leads to inhibition of FKBP4-HSP90 interaction. Interacts with dynein; causes partially NR3C1 transport to the nucleus. In terms of processing, phosphorylation by CK2 results in loss of HSP90 binding activity. Widely detected in the brain (at protein level).

The protein resides in the cytoplasm. Its subcellular location is the cytosol. The protein localises to the mitochondrion. It localises to the nucleus. It is found in the cytoskeleton. The protein resides in the cell projection. Its subcellular location is the axon. The enzyme catalyses [protein]-peptidylproline (omega=180) = [protein]-peptidylproline (omega=0). With respect to regulation, inhibited by FK506. Functionally, immunophilin protein with PPIase and co-chaperone activities. Component of unligated steroid receptors heterocomplexes through interaction with heat-shock protein 90 (HSP90). Plays a role in the intracellular trafficking of heterooligomeric forms of steroid hormone receptors between cytoplasm and nuclear compartments. May have a protective role against oxidative stress in mitochondria. Also acts as a regulator of microtubule dynamics by inhibiting MAPT/TAU ability to promote microtubule assembly. The PPIase activity controls neuronal growth cones via regulation of TRPC1 channel opening. The sequence is that of Peptidyl-prolyl cis-trans isomerase FKBP4 (Fkbp4) from Rattus norvegicus (Rat).